The following is a 147-amino-acid chain: Protein MGF 100-3L (147 aa).

This sequence belongs to the asfivirus MGF 100 family.

Plays a role in virus cell tropism, and may be required for efficient virus replication in macrophages. The chain is Protein MGF 100-3L from African swine fever virus (isolate Tick/Malawi/Lil 20-1/1983) (ASFV).